Consider the following 214-residue polypeptide: tRNA (guanine-N(7)-)-methyltransferase (214 aa).

S-adenosyl-L-methionine-binding residues include Glu45, Glu70, Asp97, and Asp119. Asp119 is a catalytic residue. Substrate is bound by residues Lys123, Asp155, and 192–195; that span reads TEYE.

The protein belongs to the class I-like SAM-binding methyltransferase superfamily. TrmB family.

It carries out the reaction guanosine(46) in tRNA + S-adenosyl-L-methionine = N(7)-methylguanosine(46) in tRNA + S-adenosyl-L-homocysteine. Its pathway is tRNA modification; N(7)-methylguanine-tRNA biosynthesis. Functionally, catalyzes the formation of N(7)-methylguanine at position 46 (m7G46) in tRNA. This Clostridioides difficile (strain 630) (Peptoclostridium difficile) protein is tRNA (guanine-N(7)-)-methyltransferase.